Here is a 533-residue protein sequence, read N- to C-terminus: E3 ubiquitin-protein ligase MGRN1 (533 aa).

Glycine 2 carries N-myristoyl glycine lipidation. The segment at glutamate 278–cysteine 317 adopts an RING-type zinc-finger fold. The Required for TSG101-binding signature appears at proline 385–proline 388. Tyrosine 390 bears the Phosphotyrosine mark. The disordered stretch occupies residues glutamine 421–leucine 519. Polar residues predominate over residues glycine 423 to serine 439. Phosphoserine is present on residues serine 429, serine 450, and serine 502. Residues glutamate 443–glutamate 454 are compositionally biased toward acidic residues.

In terms of assembly, interacts with MC1R and MC4R. Interacts with TSG101. Interacts with mislocalized cytosolically exposed PRNP; this interaction alters MGRN1 subcellular location and causes lysosomal enlargement. In terms of processing, autoubiquitinated in vitro.

The protein resides in the cytoplasm. Its subcellular location is the cytosol. The protein localises to the cell membrane. It localises to the early endosome. The enzyme catalyses S-ubiquitinyl-[E2 ubiquitin-conjugating enzyme]-L-cysteine + [acceptor protein]-L-lysine = [E2 ubiquitin-conjugating enzyme]-L-cysteine + N(6)-ubiquitinyl-[acceptor protein]-L-lysine.. It functions in the pathway protein modification; protein ubiquitination. In terms of biological role, E3 ubiquitin-protein ligase. Mediates TSG101 monoubiquitination at multiple sites. Plays a role in the regulation of endosome-to-lysosome trafficking. Impairs MC1R- and MC4R-signaling by competing with GNAS-binding to MCRs and inhibiting agonist-induced cAMP production. Does not inhibit ADRB2-signaling. Does not promote MC1R ubiquitination. Also acts as a negative regulator of hedgehog signaling. This is E3 ubiquitin-protein ligase MGRN1 (Mgrn1) from Rattus norvegicus (Rat).